The following is a 95-amino-acid chain: Co-chaperonin GroES (95 aa).

It belongs to the GroES chaperonin family. As to quaternary structure, heptamer of 7 subunits arranged in a ring. Interacts with the chaperonin GroEL.

It is found in the cytoplasm. Its function is as follows. Together with the chaperonin GroEL, plays an essential role in assisting protein folding. The GroEL-GroES system forms a nano-cage that allows encapsulation of the non-native substrate proteins and provides a physical environment optimized to promote and accelerate protein folding. GroES binds to the apical surface of the GroEL ring, thereby capping the opening of the GroEL channel. The chain is Co-chaperonin GroES from Streptococcus salivarius.